Consider the following 216-residue polypeptide: MEFCGGTLRTRFQRTSVPNSPVTVVHTVAGSGKTTFIRNLLIDHPQLVARTYGTPDVPNLLGYGIRDRHGDAHIVDEYPAADLRSHPSVSIVFADPLQHHGEVRPAHFTCSHTHRFGKSTCSLLGTLGVYCTSDKEDSVTFAGAYLAEPVGTLIALGEDAELVLDNHRVEYFTPCQALGLTFPSVTLLTDAPIEDQPPVSRYIALTRHTDSLLILN.

The 110-residue stretch at 1 to 110 folds into the (+)RNA virus helicase ATP-binding domain; it reads MEFCGGTLRT…GEVRPAHFTC (110 aa). The (+)RNA virus helicase C-terminal domain occupies 111–216; it reads SHTHRFGKST…RHTDSLLILN (106 aa).

The protein belongs to the Tymovirales TGBp1 protein family. In terms of assembly, homodimer and homooligomer. Interacts with capsid protein. Interacts with host AGO1; this interaction targets the host protein for degradation, thereby suppressing the antiviral RNA silencing.

It localises to the host cytoplasm. Transports viral genome to neighboring plant cells directly through plasmosdesmata, without any budding. The movement protein allows efficient cell to cell propagation, by bypassing the host cell wall barrier. Increases plasmodesma size exclusion limit. Acts as a suppressor of RNA-mediated gene silencing, also known as post-transcriptional gene silencing (PTGS), a mechanism of plant viral defense that limits the accumulation of viral RNAs. The protein is Movement and silencing protein TGBp1 of Lilium formosanum.